The sequence spans 201 residues: MSKRIAGPEIERLIQLLARVPGLGPRSARRAALHLIKKKEALLVPLGGAMQEAAEKVRICSCCGNVDTSDPCTICTDERRAPATLIVVEDVSDLWALERAGTMNVRYHVLGGRLSPLDGIGPDDLNIKGLVERVASGAIKEVILAVNATVEGQTTAHYITDQLSNFDVRVTRLAHGVPVGGELDYLDEGTLAAALRARTTL.

The segment at Cys-60–Cys-75 adopts a C4-type zinc-finger fold. One can recognise a Toprim domain in the interval Ala-83–Pro-178.

This sequence belongs to the RecR family.

In terms of biological role, may play a role in DNA repair. It seems to be involved in an RecBC-independent recombinational process of DNA repair. It may act with RecF and RecO. The polypeptide is Recombination protein RecR (Brucella ovis (strain ATCC 25840 / 63/290 / NCTC 10512)).